Here is a 910-residue protein sequence, read N- to C-terminus: Lysine-specific demethylase 7 homolog (910 aa).

Over residues 1–11 (MDGNDINIQKN) the composition is skewed to polar residues. Disordered stretches follow at residues 1 to 58 (MDGN…HQTP), 103 to 162 (NKMG…GSEP), and 183 to 212 (QEEL…DRCG). The span at 25 to 35 (QHSDHKNHESA) shows a compositional bias: basic and acidic residues. Over residues 43-58 (YTASQPALSSTEHQTP) the composition is skewed to polar residues. The segment covering 118-130 (PKSEPKIEPHVTD) has biased composition (basic and acidic residues). Positions 150-160 (ESNQNYVSNGS) are enriched in polar residues. Positions 200-210 (PEQKTPKESDR) are enriched in basic and acidic residues. The PHD-type zinc-finger motif lies at 208 to 290 (SDRCGGCGKF…KFFCPKCVPH (83 aa)). One can recognise a JmjC domain in the interval 441–612 (SDNNEMKEIA…MQMRVYHLEN (172 aa)). Substrate-binding positions include 505–510 (TDFHVD), Tyr518, Lys525, and His580. Fe cation is bound by residues His508 and Asp510. Residue His580 coordinates Fe cation. Disordered stretches follow at residues 712-790 (KIQN…PSEV) and 864-910 (EAVH…KLKM). Over residues 748–757 (YKKKYTKKAK) the composition is skewed to basic residues. Positions 758–780 (KDNDDAPKVKKAKKEEVPEEKVP) are enriched in basic and acidic residues.

The protein belongs to the JHDM1 histone demethylase family. JHDM1D subfamily. Fe(2+) is required as a cofactor. As to expression, mainly expressed in neurons. Also weakly expressed in some muscle, intestinal and hypodermal cells.

Its subcellular location is the nucleus. Competitively inhibited by 2-hydroxyglutarate. In terms of biological role, histone demethylase required for nervous system development. Specifically demethylates dimethylated 'Lys-9', 'Lys-23' and 'Lys-27' (H3K9me2, H3K23me2 and H3K27me2, respectively) of histone H3, thereby playing a central role in histone code. Promotes mitochondrial stress-induced longevity. This is Lysine-specific demethylase 7 homolog (jmjd-1.2) from Caenorhabditis elegans.